A 257-amino-acid chain; its full sequence is MDHMSHNMDSMASMTSTMTMAMSASSTASAPMSTGSAHSMGGMDMGGKDSMHSCKISMLWNWYTIDSCFLSSQWHNTSRGMFAGSCIGVICLVICLEFLRRVGREYDAFIVRRARLRNQYLSTTASSQGLTRATDADASAEDSPNSTRGVVRAASKGAGRTLCSAFEDKTPVRPTLIEQLVRALLHMLQFAVAYFVMLLAMYFNGYIIICIFIGAFLGSFIFSWEPLNLQKEYVIPLPLPYLPQMICKELGLTCVLV.

Transmembrane regions (helical) follow at residues 79-99 and 202-222; these read RGMFAGSCIGVICLVICLEFL and YFNGYIIICIFIGAFLGSFIF.

The protein belongs to the copper transporter (Ctr) (TC 1.A.56) family. SLC31A subfamily.

It is found in the cell membrane. The enzyme catalyses Cu(2+)(in) = Cu(2+)(out). In terms of biological role, high-affinity copper transporter of plasma membrane that mediates copper uptake under low copper conditions. The mechanism driving the transmembrane transport of copper has still to be determined. Acts as a potential virulence factor. This is High-affinity copper transporter ctrC from Aspergillus fumigatus (strain ATCC MYA-4609 / CBS 101355 / FGSC A1100 / Af293) (Neosartorya fumigata).